Here is a 234-residue protein sequence, read N- to C-terminus: Large ribosomal subunit protein uL1 (234 aa).

Belongs to the universal ribosomal protein uL1 family. As to quaternary structure, part of the 50S ribosomal subunit.

Functionally, binds directly to 23S rRNA. The L1 stalk is quite mobile in the ribosome, and is involved in E site tRNA release. Protein L1 is also a translational repressor protein, it controls the translation of the L11 operon by binding to its mRNA. The chain is Large ribosomal subunit protein uL1 from Desulfatibacillum aliphaticivorans.